The following is a 180-amino-acid chain: ATP-dependent protease subunit HslV (180 aa).

Residue T6 is part of the active site. A164, C167, and T170 together coordinate Na(+).

The protein belongs to the peptidase T1B family. HslV subfamily. As to quaternary structure, a double ring-shaped homohexamer of HslV is capped on each side by a ring-shaped HslU homohexamer. The assembly of the HslU/HslV complex is dependent on binding of ATP.

Its subcellular location is the cytoplasm. It carries out the reaction ATP-dependent cleavage of peptide bonds with broad specificity.. With respect to regulation, allosterically activated by HslU binding. Its function is as follows. Protease subunit of a proteasome-like degradation complex believed to be a general protein degrading machinery. The chain is ATP-dependent protease subunit HslV from Borrelia turicatae (strain 91E135).